A 264-amino-acid polypeptide reads, in one-letter code: V-type proton ATPase subunit D (264 aa).

Residues 214–230 show a composition bias toward basic and acidic residues; the sequence is RDNAETDAQMKAKKAEQ. A disordered region spans residues 214–264; the sequence is RDNAETDAQMKAKKAEQQRLALADSENAEGEQTENTPADILAAEEDEDVIF. Residues 255–264 are compositionally biased toward acidic residues; that stretch reads AAEEDEDVIF.

It belongs to the V-ATPase D subunit family. V-ATPase is a heteromultimeric enzyme composed of a peripheral catalytic V1 complex (components A to H) attached to an integral membrane V0 proton pore complex (components: a, c, c', c'', d, e, f and VOA1).

It is found in the vacuole membrane. Subunit of the V1 complex of vacuolar(H+)-ATPase (V-ATPase), a multisubunit enzyme composed of a peripheral complex (V1) that hydrolyzes ATP and a membrane integral complex (V0) that translocates protons. V-ATPase is responsible for acidifying and maintaining the pH of intracellular compartments. This is V-type proton ATPase subunit D (vma-8) from Neurospora crassa (strain ATCC 24698 / 74-OR23-1A / CBS 708.71 / DSM 1257 / FGSC 987).